A 415-amino-acid chain; its full sequence is Phosphoglycerate kinase (415 aa).

Substrate is bound by residues Asp-27–Asn-29, Arg-44, His-67–Arg-70, Arg-124, and Arg-164. Residues Glu-336 and Gly-362 to Met-365 contribute to the ATP site.

Belongs to the phosphoglycerate kinase family. Monomer.

The protein resides in the cytoplasm. The enzyme catalyses (2R)-3-phosphoglycerate + ATP = (2R)-3-phospho-glyceroyl phosphate + ADP. Its pathway is carbohydrate degradation; glycolysis; pyruvate from D-glyceraldehyde 3-phosphate: step 2/5. In Sulfolobus acidocaldarius (strain ATCC 33909 / DSM 639 / JCM 8929 / NBRC 15157 / NCIMB 11770), this protein is Phosphoglycerate kinase.